A 320-amino-acid polypeptide reads, in one-letter code: ATP-dependent 6-phosphofructokinase (320 aa).

Gly12 contributes to the ATP binding site. ADP contacts are provided by residues 22–26 (RGVVR) and 55–60 (RYSVSD). Residues 73-74 (RF) and 103-106 (GDGS) contribute to the ATP site. Asp104 contacts Mg(2+). Residue 126–128 (TID) coordinates substrate. Residue Asp128 is the Proton acceptor of the active site. Arg155 lines the ADP pocket. Residues Arg163 and 170 to 172 (MGR) contribute to the substrate site. ADP contacts are provided by residues 186–188 (GCE), Lys212, and 214–216 (KKH). Substrate is bound by residues Glu223, Arg244, and 250 to 253 (HIQR).

This sequence belongs to the phosphofructokinase type A (PFKA) family. ATP-dependent PFK group I subfamily. Prokaryotic clade 'B1' sub-subfamily. In terms of assembly, homotetramer. Requires Mg(2+) as cofactor.

The protein resides in the cytoplasm. The catalysed reaction is beta-D-fructose 6-phosphate + ATP = beta-D-fructose 1,6-bisphosphate + ADP + H(+). It participates in carbohydrate degradation; glycolysis; D-glyceraldehyde 3-phosphate and glycerone phosphate from D-glucose: step 3/4. Allosterically activated by ADP and other diphosphonucleosides, and allosterically inhibited by phosphoenolpyruvate. Functionally, catalyzes the phosphorylation of D-fructose 6-phosphate to fructose 1,6-bisphosphate by ATP, the first committing step of glycolysis. The sequence is that of ATP-dependent 6-phosphofructokinase from Klebsiella pneumoniae (strain 342).